The primary structure comprises 22 residues: EQLIELVGPWKTVYIVHFNGET.

It belongs to the calycin superfamily. Lipocalin family. In terms of assembly, homodimer. The N-terminus is blocked.

Its function is as follows. Binds the chemical odorant, 2-isobutyl-3-methoxypyrazine. This Oryctolagus cuniculus (Rabbit) protein is Odorant-binding protein 1.